The chain runs to 589 residues: Muscarinic acetylcholine receptor M3 (589 aa).

Over 1–66 (MTLHSNSTTS…DPLGGHTIWQ (66 aa)) the chain is Extracellular. N-linked (GlcNAc...) asparagine glycosylation is found at N6, N15, N41, N48, and N52. A helical transmembrane segment spans residues 67–90 (VVFIAFLTGFLALVTIIGNILVIV). The Cytoplasmic portion of the chain corresponds to 91–103 (AFKVNKQLKTVNN). The helical transmembrane segment at 104–129 (YFLLSLACADLIIGVISMNLFTTYII) threads the bilayer. Topologically, residues 130–141 (MNRWALGNLACD) are extracellular. Cysteines 140 and 220 form a disulfide. Residues 142–163 (LWLSIDYVASNASVMNLLVISF) traverse the membrane as a helical segment. The Cytoplasmic portion of the chain corresponds to 164 to 183 (DRYFSITRPLTYRAKRTTKR). A helical transmembrane segment spans residues 184 to 205 (AGVMIGLAWVISFVLWAPAILF). The Extracellular portion of the chain corresponds to 206–228 (WQYFVGKRTVPPGECFIQFLSEP). The helical transmembrane segment at 229–251 (TITFGTAIAAFYMPVTIMTILYW) threads the bilayer. The Cytoplasmic portion of the chain corresponds to 252-490 (RIYKETEKRT…SLIKEKKAAQ (239 aa)). The Basolateral sorting signal motif lies at 274–280 (AEAENFV). 2 disordered regions span residues 275–295 (EAENFVHPTGSSRSCSSYELQ) and 323–356 (AEQMDQDHSSSDSWNNNDAAASLENSASSDEEDI). A compositionally biased stretch (polar residues) spans 283–295 (TGSSRSCSSYELQ). Residues 333–344 (SDSWNNNDAAAS) show a composition bias toward low complexity. Residue S384 is modified to Phosphoserine. Residues 491–513 (TLSAILLAFIITWTPYNIMVLVN) form a helical membrane-spanning segment. The Extracellular portion of the chain corresponds to 514 to 525 (TFCDSCIPKTYW). C516 and C519 are disulfide-bonded. A helical transmembrane segment spans residues 526–545 (NLGYWLCYINSTVNPVCYAL). Residues 546–589 (CNKTFRTTFKMLLLCQCDKRKRRKQQYQQRQSVIFHKRVPEQAL) are Cytoplasmic-facing.

This sequence belongs to the G-protein coupled receptor 1 family. Muscarinic acetylcholine receptor subfamily. CHRM3 sub-subfamily. In terms of assembly, homodimer; the dimers can form tetramers. Interacts with NALCN. Interacts with TMEM147. In terms of tissue distribution, expressed in cerebral cortex, submandibular gland, hypothalamus, pancreas, liver, and ileum.

Its subcellular location is the cell membrane. It localises to the postsynaptic cell membrane. The protein resides in the basolateral cell membrane. The protein localises to the endoplasmic reticulum membrane. Its function is as follows. The muscarinic acetylcholine receptor mediates various cellular responses, including inhibition of adenylate cyclase, breakdown of phosphoinositides and modulation of potassium channels through the action of G proteins. Primary transducing effect is Pi turnover. This Mus musculus (Mouse) protein is Muscarinic acetylcholine receptor M3 (Chrm3).